The sequence spans 356 residues: Cyanide hydratase (356 aa).

A CN hydrolase domain is found at 8 to 287; it reads YKAAAVNAEP…EGLLFVDIDL (280 aa). Glu-48 (proton acceptor) is an active-site residue. Residue Lys-130 is part of the active site. Cys-165 (nucleophile) is an active-site residue.

The protein belongs to the carbon-nitrogen hydrolase superfamily. Nitrilase family. Oligomer of dimers, forming left-handed helical fibers.

It carries out the reaction formamide = hydrogen cyanide + H2O. In terms of biological role, catalyzes the hydration of cyanide to formamide. Degradation of cyanide may be important for plant pathogenic fungi in infection of cyanogenic plants. Can also transform some nitriles like 2-cyanopyridine and fumaronitrile. This Aspergillus niger protein is Cyanide hydratase.